A 574-amino-acid polypeptide reads, in one-letter code: Bifunctional NADP phosphatase/NAD kinase (574 aa).

An NADP phosphatase region spans residues Met-1 to Trp-297. Glu-69, Asp-87, Ile-89, Asp-90, and Asp-243 together coordinate Mg(2+). Residues Val-302–Lys-574 form an NAD kinase region. Asp-362 (proton acceptor) is an active-site residue. Residues Asp-362–Gly-363, Arg-367, Asn-436–Glu-437, Lys-447, Arg-464, Asp-466, and Thr-477–Ser-482 each bind NAD(+).

This sequence in the N-terminal section; belongs to the inositol monophosphatase superfamily. In the C-terminal section; belongs to the NAD kinase family. As to quaternary structure, homotetramer. It depends on Mg(2+) as a cofactor.

Its subcellular location is the cytoplasm. It carries out the reaction NAD(+) + ATP = ADP + NADP(+) + H(+). It catalyses the reaction NADP(+) + H2O = phosphate + NAD(+). The catalysed reaction is UTP + NAD(+) = UDP + NADP(+) + H(+). The enzyme catalyses 5-methyl-UTP + NAD(+) = 5-methyl-UDP + NADP(+) + H(+). It carries out the reaction CTP + NAD(+) = CDP + NADP(+) + H(+). It catalyses the reaction GTP + NAD(+) = GDP + NADP(+) + H(+). The catalysed reaction is dATP + NAD(+) = dADP + NADP(+) + H(+). The enzyme catalyses NADPH + H2O = phosphate + NADH. It carries out the reaction adenosine 2'-phosphate + H2O = adenosine + phosphate. It catalyses the reaction beta-D-fructose 1,6-bisphosphate + H2O = beta-D-fructose 6-phosphate + phosphate. With respect to regulation, phosphatase activity is slightly inhibited by ADP, NADH and ATP, and moderately inhibited by NAD and 5'-AMP. Kinase activity is slightly inhibited by ADP and NADP. Involved in the regulation of the intracellular balance between NAD(H) and NADP(H), and is a key enzyme in the biosynthesis of NADP. Catalyzes the phosphorylation and dephosphorylation of NAD and NADP, respectively. Although it shows conflicting dual activities and is able to supply NADP, it seems that its physiological role is to prevent excess accumulation of NADP. Kinase can use ATP and other nucleoside triphosphates (UTP, TTP, CTP, GTP) as well as inorganic polyphosphate (poly(P)) as phosphoryl donors, however poly(P) is not considered to be the physiological phosphoryl donor. NAD is the preferred substrate for the kinase, but NADH can also be used as phosphoryl acceptor. Phosphatase can use NADP or NADPH as phosphoryl donor, but NADP is the preferred substrate. Phosphatase also has an activity toward the terminal phosphate group at C-2 of adenosine in 2'-AMP and toward the phosphate group at C-1 of fructose 1,6-bisphosphate, but not toward inositol 1-phosphate. In Methanocaldococcus jannaschii (strain ATCC 43067 / DSM 2661 / JAL-1 / JCM 10045 / NBRC 100440) (Methanococcus jannaschii), this protein is Bifunctional NADP phosphatase/NAD kinase.